Here is a 264-residue protein sequence, read N- to C-terminus: MPRSLKRAQLRSLLPRPPAVSHTQPWYRAAHPTTSPTAASRDVHPASGAVPGPWLVEGTAVREGPQLQDAVPQRPTRPSKALWPAQMSAAPAIRLGQMVPGDTRGLWGPQGTLLTWTYRGGQGGRWTRRAEGPREGTFAEQRPHFQSSGAQQESRLAMGPPPLGLGDAAGDGRGQTGQEKGRAEGRQARKSACKCPRKGPNPGPWTRAAAWWGRLEGAKASAKGEQVRDPGGHLWEQGHVSPCARFNQGHSCGSPKVSHTTWVS.

2 disordered regions span residues 1 to 52 (MPRS…AVPG) and 123 to 207 (GGRW…PWTR). Residues 29–40 (AAHPTTSPTAAS) are compositionally biased toward low complexity. Over residues 144 to 154 (HFQSSGAQQES) the composition is skewed to polar residues. The span at 188–197 (ARKSACKCPR) shows a compositional bias: basic residues.

This is an uncharacterized protein from Homo sapiens (Human).